A 165-amino-acid chain; its full sequence is Chorismate pyruvate-lyase (165 aa).

Positions 77, 115, and 156 each coordinate substrate.

Belongs to the UbiC family. Monomer.

It localises to the cytoplasm. It carries out the reaction chorismate = 4-hydroxybenzoate + pyruvate. It participates in cofactor biosynthesis; ubiquinone biosynthesis. Removes the pyruvyl group from chorismate, with concomitant aromatization of the ring, to provide 4-hydroxybenzoate (4HB) for the ubiquinone pathway. This Salmonella typhi protein is Chorismate pyruvate-lyase.